The primary structure comprises 259 residues: Type III pantothenate kinase (259 aa).

Residue 6–13 (DVGNTNIV) participates in ATP binding. Substrate-binding positions include Y100 and 107–110 (GADR). The active-site Proton acceptor is D109. D129 is a K(+) binding site. ATP is bound at residue T132. Residue T184 coordinates substrate.

It belongs to the type III pantothenate kinase family. As to quaternary structure, homodimer. NH4(+) serves as cofactor. K(+) is required as a cofactor.

The protein localises to the cytoplasm. It catalyses the reaction (R)-pantothenate + ATP = (R)-4'-phosphopantothenate + ADP + H(+). Its pathway is cofactor biosynthesis; coenzyme A biosynthesis; CoA from (R)-pantothenate: step 1/5. In terms of biological role, catalyzes the phosphorylation of pantothenate (Pan), the first step in CoA biosynthesis. The sequence is that of Type III pantothenate kinase from Clostridium perfringens (strain 13 / Type A).